We begin with the raw amino-acid sequence, 627 residues long: Pentatricopeptide repeat-containing protein At2g35030, mitochondrial (627 aa).

Residues 1 to 44 (MQSRALSRLRSYYKRSSVFPSSDNDRSVQLFNLVRSIYSSSSRP) constitute a mitochondrion transit peptide. 14 PPR repeats span residues 45–75 (RVPQPEWLIGELCKVGKIAEARKLFDGLPER), 76–110 (DVVTWTHVITGYIKLGDMREARELFDRVDSRKNVV), 111–138 (TWTAMVSGYLRSKQLSIAEMLFQEMPER), 139–173 (NVVSWNTMIDGYAQSGRIDKALELFDEMPERNIVS), 174–200 (WNSMVKALVQRGRIDEAMNLFERMPRR), 201–235 (DVVSWTAMVDGLAKNGKVDEARRLFDCMPERNIIS), 236–262 (WNAMITGYAQNNRIDEADQLFQVMPER), 263–293 (DFASWNTMITGFIRNREMNKACGLFDRMPEK), 294–328 (NVISWTTMITGYVENKENEEALNVFSKMLRDGSVK), 330–360 (NVGTYVSILSACSDLAGLVEGQQIHQLISKS), 365–396 (NEIVTSALLNMYSKSGELIAARKMFDNGLVCQ), 398–432 (DLISWNSMIAVYAHHGHGKEAIEMYNQMRKHGFKP), 433–467 (SAVTYLNLLFACSHAGLVEKGMEFFKDLVRDESLP), and 469–499 (REEHYTCLVDLCGRAGRLKDVTNFINCDDAR). Residues 504–579 (FYGAILSACN…QPGCSWVKVG (76 aa)) are type E motif. Residues 580–610 (KQNHLFVVGDKSHPQFEALDSILSDLRNKMR) are type E(+) motif.

This sequence belongs to the PPR family. PCMP-E subfamily.

Its subcellular location is the mitochondrion. This is Pentatricopeptide repeat-containing protein At2g35030, mitochondrial (PCMP-E15) from Arabidopsis thaliana (Mouse-ear cress).